A 530-amino-acid chain; its full sequence is uncharacterized protein (530 aa).

This sequence belongs to the mimivirus R640 family.

This is an uncharacterized protein from Acanthamoeba polyphaga (Amoeba).